The following is a 261-amino-acid chain: Cytochrome c oxidase subunit 3 (261 aa).

Over 1–15 (MAHQAHSYHMVDPSP) the chain is Mitochondrial matrix. A helical membrane pass occupies residues 16-34 (WPIFGAAAALLTTSGLIMW). Residues 35 to 40 (FHYSST) lie on the Mitochondrial intermembrane side of the membrane. Residues 41–66 (TLLTMGLLSMLLVMLQWWRDVVREST) form a helical membrane-spanning segment. Topologically, residues 67–72 (FQGHHT) are mitochondrial matrix. The chain crosses the membrane as a helical span at residues 73-105 (PTVQKGLRYGMILFITSEAFFFLGFFWAFFHSS). Residues 106–128 (LAPTPELGGQWPPTGVKPLNPLE) are Mitochondrial intermembrane-facing. The helical transmembrane segment at 129 to 152 (VPLLNTAILLASGVTVTWAHHSIT) threads the bilayer. Residues 153–155 (EGN) lie on the Mitochondrial matrix side of the membrane. Residues 156–183 (RKQAIHALTLTILLGFYFTALQAMEYHE) form a helical membrane-spanning segment. Residues 184–190 (ASFSIAD) are Mitochondrial intermembrane-facing. Residues 191 to 223 (SVYGSTFFVATGFHGLHVIIGSSFLTVCLLRLI) form a helical membrane-spanning segment. Over 224–232 (KFHFTPNHH) the chain is Mitochondrial matrix. Residues 233–256 (FGFEAAAWYWHFVDIIWLFLYMSM) traverse the membrane as a helical segment. The Mitochondrial intermembrane portion of the chain corresponds to 257 to 261 (YWWGS).

This sequence belongs to the cytochrome c oxidase subunit 3 family. In terms of assembly, component of the cytochrome c oxidase (complex IV, CIV), a multisubunit enzyme composed of 14 subunits. The complex is composed of a catalytic core of 3 subunits MT-CO1, MT-CO2 and MT-CO3, encoded in the mitochondrial DNA, and 11 supernumerary subunits COX4I, COX5A, COX5B, COX6A, COX6B, COX6C, COX7A, COX7B, COX7C, COX8 and NDUFA4, which are encoded in the nuclear genome. The complex exists as a monomer or a dimer and forms supercomplexes (SCs) in the inner mitochondrial membrane with NADH-ubiquinone oxidoreductase (complex I, CI) and ubiquinol-cytochrome c oxidoreductase (cytochrome b-c1 complex, complex III, CIII), resulting in different assemblies (supercomplex SCI(1)III(2)IV(1) and megacomplex MCI(2)III(2)IV(2)).

It is found in the mitochondrion inner membrane. It carries out the reaction 4 Fe(II)-[cytochrome c] + O2 + 8 H(+)(in) = 4 Fe(III)-[cytochrome c] + 2 H2O + 4 H(+)(out). Component of the cytochrome c oxidase, the last enzyme in the mitochondrial electron transport chain which drives oxidative phosphorylation. The respiratory chain contains 3 multisubunit complexes succinate dehydrogenase (complex II, CII), ubiquinol-cytochrome c oxidoreductase (cytochrome b-c1 complex, complex III, CIII) and cytochrome c oxidase (complex IV, CIV), that cooperate to transfer electrons derived from NADH and succinate to molecular oxygen, creating an electrochemical gradient over the inner membrane that drives transmembrane transport and the ATP synthase. Cytochrome c oxidase is the component of the respiratory chain that catalyzes the reduction of oxygen to water. Electrons originating from reduced cytochrome c in the intermembrane space (IMS) are transferred via the dinuclear copper A center (CU(A)) of subunit 2 and heme A of subunit 1 to the active site in subunit 1, a binuclear center (BNC) formed by heme A3 and copper B (CU(B)). The BNC reduces molecular oxygen to 2 water molecules using 4 electrons from cytochrome c in the IMS and 4 protons from the mitochondrial matrix. The protein is Cytochrome c oxidase subunit 3 (MT-CO3) of Gallus gallus (Chicken).